The primary structure comprises 134 residues: Small ribosomal subunit protein uS8c (134 aa).

This sequence belongs to the universal ribosomal protein uS8 family. In terms of assembly, part of the 30S ribosomal subunit.

It localises to the plastid. In terms of biological role, one of the primary rRNA binding proteins, it binds directly to 16S rRNA central domain where it helps coordinate assembly of the platform of the 30S subunit. The protein is Small ribosomal subunit protein uS8c (rps8) of Epifagus virginiana (Beechdrops).